A 36-amino-acid polypeptide reads, in one-letter code: MVEILLSGIVLGLIPITILGLLMAAYFQYQRSKAAS.

The helical transmembrane segment at 5–25 (LLSGIVLGLIPITILGLLMAA) threads the bilayer.

This sequence belongs to the PetG family. As to quaternary structure, the 4 large subunits of the cytochrome b6-f complex are cytochrome b6, subunit IV (17 kDa polypeptide, PetD), cytochrome f and the Rieske protein, while the 4 small subunits are PetG, PetL, PetM and PetN. The complex functions as a dimer.

It localises to the plastid. The protein localises to the chloroplast thylakoid membrane. Component of the cytochrome b6-f complex, which mediates electron transfer between photosystem II (PSII) and photosystem I (PSI), cyclic electron flow around PSI, and state transitions. PetG is required for either the stability or assembly of the cytochrome b6-f complex. This Cyanidioschyzon merolae (strain NIES-3377 / 10D) (Unicellular red alga) protein is Cytochrome b6-f complex subunit 5.